The sequence spans 772 residues: Cellulosomal-scaffolding protein B (772 aa).

The 80-residue stretch at 1-80 folds into the Cohesin 1 domain; the sequence is DPSKSFDSAI…TTFVAGGVNL (80 aa). Residues 81 to 93 form a linker (Pro/Thr-rich) region; the sequence is GSSVPTTQPNVPS. The Cohesin 2 domain occupies 94-240; sequence DGVVVEIGKV…VNVGNATPTK (147 aa). Over residues 235–276 the composition is skewed to low complexity; that stretch reads NATPTKGATPTNTATPTKSATATPPGHSVPTNTPTNTPANTP. Disordered regions lie at residues 235-277 and 438-464; these read NATP…NTPV and VVPSTQPVTTPPATTKPPATTIPPSDD. Positions 241–272 are linker (Pro/Thr-rich); sequence GATPTNTATPTKSATATPPGHSVPTNTPTNTP. The 159-residue stretch at 277 to 435 folds into the CBM3 domain; sequence VSGNLKVEFY…GVLVWGKEPG (159 aa). Over residues 438 to 461 the composition is skewed to low complexity; that stretch reads VVPSTQPVTTPPATTKPPATTIPP. The interval 440 to 461 is linker (Pro/Thr-rich); that stretch reads PSTQPVTTPPATTKPPATTIPP. Residues 462–607 enclose the Cohesin 3 domain; sequence SDDPNAIKIK…ETDLINGGVL (146 aa). The Dockerin domain occupies 704–771; that stretch reads IMMWVGDIVK…FGATSSDYDA (68 aa).

In terms of processing, O-glycosylated on most but not all Thr residues of the linker units.

It is found in the secreted. In terms of biological role, acts as a scaffolding protein in the cellulosome. It promotes binding of cellulose to the catalytic domains of the cellulolytic enzymes probably through the binding of the nine repeated domains with dockerin domains present in catalytic subunits of the cellulosome. This is Cellulosomal-scaffolding protein B (cipB) from Acetivibrio thermocellus (Hungateiclostridium thermocellum).